The chain runs to 341 residues: Eukaryotic translation initiation factor 2 subunit 1 (341 aa).

The region spanning 18 to 89 (NELVMVRIES…DKGYIDLSKR (72 aa)) is the S1 motif domain. The disordered stretch occupies residues 301-341 (LMEQLEVENQDGDGEEHEDDDDDDDDEEEEEKPKEKKSSRK). Acidic residues predominate over residues 303 to 330 (EQLEVENQDGDGEEHEDDDDDDDDEEEE). Residues 331-341 (EKPKEKKSSRK) show a composition bias toward basic and acidic residues.

This sequence belongs to the eIF-2-alpha family. As to quaternary structure, eukaryotic translation initiation factor 2 eIF2 is a heterotrimeric complex composed of an alpha, a beta and a gamma subunit.

The protein resides in the cytoplasm. It is found in the cytosol. Functionally, eIF-2 functions in the early steps of protein synthesis by forming a ternary complex with GTP and initiator tRNA. This complex binds to a 40S ribosomal subunit, followed by mRNA binding to form a 43S pre-initiation complex. Junction of the 60S ribosomal subunit to form the 80S initiation complex is preceded by hydrolysis of the GTP bound to eIF-2 and release of an eIF-2-GDP binary complex. In order for eIF-2 to recycle and catalyze another round of initiation, the GDP bound to eIF-2 must exchange with GTP by way of a reaction catalyzed by eIF2B. In Dictyostelium discoideum (Social amoeba), this protein is Eukaryotic translation initiation factor 2 subunit 1 (eif2s1).